Reading from the N-terminus, the 269-residue chain is RBPJ-interacting and tubulin-associated protein 1 (269 aa).

The Nuclear export signal motif lies at Val5–Leu17. Disordered stretches follow at residues Ser37 to Arg101 and Phe141 to Lys269. The span at Arg62–Asn77 shows a compositional bias: polar residues. Positions Ser79–Thr93 are enriched in low complexity. A Nuclear localization signal motif is present at residues Leu92–Ser108. The tract at residues Trp128–Pro156 is interaction with RBPJ/RBPSUH. The tract at residues Pro156–Lys269 is interaction with tubulin.

The protein belongs to the RITA family. As to quaternary structure, interacts with RBPJ/RBPSUH.

It localises to the cytoplasm. The protein localises to the nucleus. It is found in the cytoskeleton. Its subcellular location is the microtubule organizing center. The protein resides in the centrosome. Tubulin-binding protein that acts as a negative regulator of Notch signaling pathway. Shuttles between the cytoplasm and the nucleus and mediates the nuclear export of RBPJ/RBPSUH, thereby preventing the interaction between RBPJ/RBPSUH and NICD product of Notch proteins (Notch intracellular domain), leading to down-regulate Notch-mediated transcription. May play a role in neurogenesis. The sequence is that of RBPJ-interacting and tubulin-associated protein 1 (RITA1) from Ailuropoda melanoleuca (Giant panda).